The primary structure comprises 348 residues: NADH-ubiquinone oxidoreductase chain 2 (348 aa).

Helical transmembrane passes span 1–21, 25–45, 60–80, 99–119, 124–144, 151–171, 178–197, 202–224, 239–259, 274–294, and 326–346; these read MNPY…TLTF, HWIL…PLMA, FLIQ…NAWI, MFAL…PEVL, LLTG…LIIQ, PLIL…SGLN, ILAY…IQYA, LIAL…VLSA, ILAA…PLTG, DLPA…FFYL, and LTIS…ILML.

It belongs to the complex I subunit 2 family. Core subunit of respiratory chain NADH dehydrogenase (Complex I) which is composed of 45 different subunits.

The protein localises to the mitochondrion inner membrane. It carries out the reaction a ubiquinone + NADH + 5 H(+)(in) = a ubiquinol + NAD(+) + 4 H(+)(out). Functionally, core subunit of the mitochondrial membrane respiratory chain NADH dehydrogenase (Complex I) which catalyzes electron transfer from NADH through the respiratory chain, using ubiquinone as an electron acceptor. Essential for the catalytic activity and assembly of complex I. This chain is NADH-ubiquinone oxidoreductase chain 2 (mt-nd2), found in Danio rerio (Zebrafish).